Consider the following 469-residue polypeptide: 3-isopropylmalate dehydratase large subunit (469 aa).

Residues Cys347, Cys408, and Cys411 each contribute to the [4Fe-4S] cluster site.

This sequence belongs to the aconitase/IPM isomerase family. LeuC type 1 subfamily. As to quaternary structure, heterodimer of LeuC and LeuD. The cofactor is [4Fe-4S] cluster.

The catalysed reaction is (2R,3S)-3-isopropylmalate = (2S)-2-isopropylmalate. It participates in amino-acid biosynthesis; L-leucine biosynthesis; L-leucine from 3-methyl-2-oxobutanoate: step 2/4. Catalyzes the isomerization between 2-isopropylmalate and 3-isopropylmalate, via the formation of 2-isopropylmaleate. The polypeptide is 3-isopropylmalate dehydratase large subunit (Histophilus somni (strain 129Pt) (Haemophilus somnus)).